A 258-amino-acid polypeptide reads, in one-letter code: Protein U52 (258 aa).

This sequence belongs to the herpesviridae UL79 family.

In Human herpesvirus 6A (strain Uganda-1102) (HHV-6 variant A), this protein is Protein U52 (U52).